The following is a 244-amino-acid chain: Securin-like protein (244 aa).

The disordered stretch occupies residues 31-53; that stretch reads ELEKTPSRGGLGLVVNSSKTPGG.

As to quaternary structure, forms a complex (via C-terminus) with separase sep-1. Interaction with ify-1 stabilizes sep-1. Also maintains the complex in the cytoplasm during interphase and recruits it to chromosomes during the first meiotic division. Interacts with E3 ubiquitin-protein ligase etc-1. In terms of processing, ubiquitinated by etc-1 likely at the onset of anaphase, resulting in its degradation. As to expression, expressed in germ cells including oocytes.

The protein resides in the cytoplasm. It is found in the chromosome. It localises to the cytoskeleton. The protein localises to the spindle. Its function is as follows. Acts as a chaperone and as an inhibitor for separase sep-1. Plays an essential role in maintaining chromosome cohesion prior to meiotic and mitotic anaphase, in cytokinesis and in organizing the spindle and the centrosome. Ubiquitination-dependent degradation at the onset of anaphase is likely to activate sep-1 resulting in the proteolysis of the cohesin complex and the subsequent segregation of the chromosomes. Also required for cortical granule exocytosis. The chain is Securin-like protein from Caenorhabditis elegans.